Reading from the N-terminus, the 339-residue chain is DNA-directed RNA polymerase subunit alpha (339 aa).

The segment at 1–235 (MTIQKNWQEL…DQLNVFVNFE (235 aa)) is alpha N-terminal domain (alpha-NTD). The segment at 251 to 339 (FNPAFLKKVD…ELAKRFEDHY (89 aa)) is alpha C-terminal domain (alpha-CTD).

This sequence belongs to the RNA polymerase alpha chain family. In terms of assembly, homodimer. The RNAP catalytic core consists of 2 alpha, 1 beta, 1 beta' and 1 omega subunit. When a sigma factor is associated with the core the holoenzyme is formed, which can initiate transcription.

It carries out the reaction RNA(n) + a ribonucleoside 5'-triphosphate = RNA(n+1) + diphosphate. Functionally, DNA-dependent RNA polymerase catalyzes the transcription of DNA into RNA using the four ribonucleoside triphosphates as substrates. The chain is DNA-directed RNA polymerase subunit alpha from Afipia carboxidovorans (strain ATCC 49405 / DSM 1227 / KCTC 32145 / OM5) (Oligotropha carboxidovorans).